Reading from the N-terminus, the 261-residue chain is Shikimate dehydrogenase (NADP(+)) (261 aa).

Shikimate is bound by residues 13–15 and Thr60; that span reads SLS. Lys64 acts as the Proton acceptor in catalysis. Asn85 and Asp100 together coordinate shikimate. NADP(+) contacts are provided by residues 121-125 and Ile202; that span reads GAGGA. Tyr204 is a shikimate binding site. Gly225 provides a ligand contact to NADP(+).

The protein belongs to the shikimate dehydrogenase family. In terms of assembly, homodimer.

The catalysed reaction is shikimate + NADP(+) = 3-dehydroshikimate + NADPH + H(+). Its pathway is metabolic intermediate biosynthesis; chorismate biosynthesis; chorismate from D-erythrose 4-phosphate and phosphoenolpyruvate: step 4/7. Its function is as follows. Involved in the biosynthesis of the chorismate, which leads to the biosynthesis of aromatic amino acids. Catalyzes the reversible NADPH linked reduction of 3-dehydroshikimate (DHSA) to yield shikimate (SA). This is Shikimate dehydrogenase (NADP(+)) from Exiguobacterium sibiricum (strain DSM 17290 / CCUG 55495 / CIP 109462 / JCM 13490 / 255-15).